The sequence spans 218 residues: Imidazole glycerol phosphate synthase subunit HisH (218 aa).

A Glutamine amidotransferase type-1 domain is found at 5-213 (RLAVIDYEAG…VEFVARCSPL (209 aa)). The active-site Nucleophile is the Cys-83. Catalysis depends on residues His-188 and Glu-190.

Heterodimer of HisH and HisF.

Its subcellular location is the cytoplasm. The enzyme catalyses 5-[(5-phospho-1-deoxy-D-ribulos-1-ylimino)methylamino]-1-(5-phospho-beta-D-ribosyl)imidazole-4-carboxamide + L-glutamine = D-erythro-1-(imidazol-4-yl)glycerol 3-phosphate + 5-amino-1-(5-phospho-beta-D-ribosyl)imidazole-4-carboxamide + L-glutamate + H(+). The catalysed reaction is L-glutamine + H2O = L-glutamate + NH4(+). It participates in amino-acid biosynthesis; L-histidine biosynthesis; L-histidine from 5-phospho-alpha-D-ribose 1-diphosphate: step 5/9. Its function is as follows. IGPS catalyzes the conversion of PRFAR and glutamine to IGP, AICAR and glutamate. The HisH subunit catalyzes the hydrolysis of glutamine to glutamate and ammonia as part of the synthesis of IGP and AICAR. The resulting ammonia molecule is channeled to the active site of HisF. This is Imidazole glycerol phosphate synthase subunit HisH from Synechococcus sp. (strain JA-2-3B'a(2-13)) (Cyanobacteria bacterium Yellowstone B-Prime).